Consider the following 426-residue polypeptide: Riboflavin biosynthesis protein PYRD, chloroplastic (426 aa).

Residues 1–61 (MQISCLPISI…SQTGFSNPVL (61 aa)) constitute a chloroplast transit peptide. The 123-residue stretch at 72–194 (VDDSFYMRKC…RLKDAGIDVT (123 aa)) folds into the CMP/dCMP-type deaminase domain. Residue H121 coordinates Zn(2+). The Proton donor role is filled by E123. The Zn(2+) site is built by C146 and C155.

Requires Zn(2+) as cofactor.

Its subcellular location is the plastid. The protein resides in the chloroplast. The catalysed reaction is 2,5-diamino-6-hydroxy-4-(5-phosphoribosylamino)-pyrimidine + H2O + H(+) = 5-amino-6-(5-phospho-D-ribosylamino)uracil + NH4(+). The protein operates within cofactor biosynthesis; riboflavin biosynthesis; 5-amino-6-(D-ribitylamino)uracil from GTP: step 2/4. Its function is as follows. Monofunctional pyrimidine deaminase involved in the riboflavin biosynthesis pathway. Also has a reductase domain that lacks catalytically essential substrate-binding residues. This is Riboflavin biosynthesis protein PYRD, chloroplastic (PYRD) from Arabidopsis thaliana (Mouse-ear cress).